We begin with the raw amino-acid sequence, 473 residues long: MHPNISLPEPFIASMAKILPDPTQLADFIAACQRPLRKSIRVNTLKISVAEFCQRAAEKEWQLTPVPWCENGFWIDADESLVPLGNTAEHMAGLFYIQEASSMMPVSALFMGNAHYDSVLDMAAAPGSKTTQMAALMDNQGVLVANEFSASRVKVLHANIERCGIRNTALSNFDGCVFGGWLPERFDAVLIDAPCSGEGTIRKDPDAMKNWSLESIQSIANTQKALIESAFQALKVGGTLVYSTCTLSREENQQVCWHLKQTYGDAVSFESLGNLFEHASLALTEEGFLHIFPQMYDCEGFFVAKIRKLASVPTPEVNKRLGKFPFNKASHKQQAEIAQQLHKSLGIELPSDAQVWLRDNDVWLFPEALEPLLGELRFSRMGIKIAEAHKSGYRWQHQVATCLASSSASHSVELDTTQAREWFMGRDVRPEGQSGQGEVIIRYANDVIGLGKWVGNRVKNGLPRELVRDKNLF.

S-adenosyl-L-methionine contacts are provided by residues 123-129 (AAAPGSK), E147, D174, and D192. The Nucleophile role is filled by C245.

It belongs to the class I-like SAM-binding methyltransferase superfamily. RsmB/NOP family.

The protein localises to the cytoplasm. It carries out the reaction cytidine(1407) in 16S rRNA + S-adenosyl-L-methionine = 5-methylcytidine(1407) in 16S rRNA + S-adenosyl-L-homocysteine + H(+). Functionally, specifically methylates the cytosine at position 1407 (m5C1407) of 16S rRNA. In Vibrio cholerae serotype O1 (strain ATCC 39315 / El Tor Inaba N16961), this protein is Ribosomal RNA small subunit methyltransferase F.